Here is a 203-residue protein sequence, read N- to C-terminus: V-type ATP synthase subunit D (203 aa).

The protein belongs to the V-ATPase D subunit family.

Functionally, produces ATP from ADP in the presence of a proton gradient across the membrane. This Chlamydia trachomatis serovar L2 (strain ATCC VR-902B / DSM 19102 / 434/Bu) protein is V-type ATP synthase subunit D.